Consider the following 203-residue polypeptide: FMN-dependent NADH:quinone oxidoreductase (203 aa).

143–146 (SNGG) lines the FMN pocket.

Belongs to the azoreductase type 1 family. In terms of assembly, homodimer. Requires FMN as cofactor.

The enzyme catalyses 2 a quinone + NADH + H(+) = 2 a 1,4-benzosemiquinone + NAD(+). It carries out the reaction N,N-dimethyl-1,4-phenylenediamine + anthranilate + 2 NAD(+) = 2-(4-dimethylaminophenyl)diazenylbenzoate + 2 NADH + 2 H(+). Its function is as follows. Quinone reductase that provides resistance to thiol-specific stress caused by electrophilic quinones. Functionally, also exhibits azoreductase activity. Catalyzes the reductive cleavage of the azo bond in aromatic azo compounds to the corresponding amines. This Streptococcus suis (strain 98HAH33) protein is FMN-dependent NADH:quinone oxidoreductase.